Here is an 88-residue protein sequence, read N- to C-terminus: Monensin polyketide synthase acyl carrier protein (88 aa).

The Carrier domain occupies 5–82; sequence PFTLADLQRI…ELIDHVNERL (78 aa). Serine 42 carries the post-translational modification O-(pantetheine 4'-phosphoryl)serine.

4'-phosphopantetheine is transferred from CoA to a specific serine of the apo-ACP-like protein.

It functions in the pathway antifungal biosynthesis; monensin biosynthesis. Its function is as follows. Acyl carrier protein. This chain is Monensin polyketide synthase acyl carrier protein, found in Streptomyces virginiae (Streptomyces cinnamonensis).